The primary structure comprises 163 residues: Nucleotide-binding protein ROP_16630 (163 aa).

It belongs to the YajQ family.

Nucleotide-binding protein. This is Nucleotide-binding protein ROP_16630 from Rhodococcus opacus (strain B4).